Here is a 612-residue protein sequence, read N- to C-terminus: Elongation factor 4 (612 aa).

Residues 12 to 194 (SRIRNFSIIA…QIVEKVPAPT (183 aa)) form the tr-type G domain. GTP-binding positions include 24–29 (DHGKST) and 141–144 (NKID).

This sequence belongs to the TRAFAC class translation factor GTPase superfamily. Classic translation factor GTPase family. LepA subfamily.

It is found in the cell membrane. It carries out the reaction GTP + H2O = GDP + phosphate + H(+). In terms of biological role, required for accurate and efficient protein synthesis under certain stress conditions. May act as a fidelity factor of the translation reaction, by catalyzing a one-codon backward translocation of tRNAs on improperly translocated ribosomes. Back-translocation proceeds from a post-translocation (POST) complex to a pre-translocation (PRE) complex, thus giving elongation factor G a second chance to translocate the tRNAs correctly. Binds to ribosomes in a GTP-dependent manner. The polypeptide is Elongation factor 4 (Bacillus subtilis (strain 168)).